A 72-amino-acid chain; its full sequence is Translation initiation factor IF-1 (72 aa).

An S1-like domain is found at 1–72 (MAKEDNIEMQ…SKGRIVFRSR (72 aa)).

This sequence belongs to the IF-1 family. As to quaternary structure, component of the 30S ribosomal translation pre-initiation complex which assembles on the 30S ribosome in the order IF-2 and IF-3, IF-1 and N-formylmethionyl-tRNA(fMet); mRNA recruitment can occur at any time during PIC assembly.

It is found in the cytoplasm. One of the essential components for the initiation of protein synthesis. Stabilizes the binding of IF-2 and IF-3 on the 30S subunit to which N-formylmethionyl-tRNA(fMet) subsequently binds. Helps modulate mRNA selection, yielding the 30S pre-initiation complex (PIC). Upon addition of the 50S ribosomal subunit IF-1, IF-2 and IF-3 are released leaving the mature 70S translation initiation complex. This Shewanella loihica (strain ATCC BAA-1088 / PV-4) protein is Translation initiation factor IF-1.